The primary structure comprises 671 residues: MEREPENGEPAEIKIIKEAYEKAFMFVNKGLNTDELGQKEEAKNYYKQGIGHLLRGISIAAAEPGHTGPAWEAARQMQQKMKETLQNVRTRLEILEKGLATSLRNDLQDVPKLYPEFPPKDACKKSPEQESVSTAPQRAEVDGSASAACAGPSGAPSALPVPSPSCPAEAPPAYSPQAAEGHYTVSYGTDSGEFSSVGEDFYRNRSQPPPLETLGLDADELILIPNGVQIFFVNPAGEVSAPSYPGYLRIVRFLDNSLDTVLNRPPGFLQVCDWLYPLVPDRSPVLKCTVGAYMFPDTMLQAAGCFVGVVLSSELPEDDRELFEDLLRQMSDLRLQANWNREEDEFQIPGRSSHPSEPPKEASGTDVRQSSSSGSSIDQGSKDARHKGKRGKKTKDSSEEVNLSQIVPCEPSSEEKSKELPEWSEKVAHNILSGASWVSWGLVKGAEFTGKAIQKGASKLRERIQPEEKPVEVSPAVTRGLYIAKQATGGAAKVSQLLVDGVCTVANCVGKELAPHVKKHGSKLVPESLKRDKDGKSALDGAMVVAASSVQGFSTVWQGLECAAKCIVNNVSAETVQTVRYKYGHNAGEATHNAVDSAINVGLTAYNIDNIGIKAMVKKTAKQTGHTLLEDYQIVERPQRESQGGATSTEGRRDIGKQVEEEKPGAGKKDK.

At M1 the chain carries N-acetylmethionine. An MIT domain is found at 16–94 (IKEAYEKAFM…LQNVRTRLEI (79 aa)). A disordered region spans residues 110–175 (VPKLYPEFPP…CPAEAPPAYS (66 aa)). Residues 118–128 (PPKDACKKSPE) show a composition bias toward basic and acidic residues. The residue at position 126 (S126) is a Phosphoserine. A compositionally biased stretch (low complexity) spans 143–158 (GSASAACAGPSGAPSA). Residues 159–174 (LPVPSPSCPAEAPPAY) show a composition bias toward pro residues. The tract at residues 190–385 (DSGEFSSVGE…SIDQGSKDAR (196 aa)) is ubiquitin-binding region (UBR) domain. The LC3-interacting region (LIR); mediates interaction with MAP1LC3A AND MAP1LC3C signature appears at 193–200 (EFSSVGED). Positions 346–421 (FQIPGRSSHP…SSEEKSKELP (76 aa)) are disordered. K360 participates in a covalent cross-link: Glycyl lysine isopeptide (Lys-Gly) (interchain with G-Cter in ubiquitin). Residues 369–379 (QSSSSGSSIDQ) are compositionally biased toward low complexity. The span at 384–393 (ARHKGKRGKK) shows a compositional bias: basic residues. Residues 431–615 (ILSGASWVSW…YNIDNIGIKA (185 aa)) enclose the Senescence domain. Residues 435–507 (ASWVSWGLVK…LVDGVCTVAN (73 aa)) are required for localization to lipid droplets. S474 is modified (phosphoserine). Residues 635–671 (VERPQRESQGGATSTEGRRDIGKQVEEEKPGAGKKDK) form a disordered region. Residues 650–671 (EGRRDIGKQVEEEKPGAGKKDK) are compositionally biased toward basic and acidic residues.

In terms of assembly, interacts with ITCH and WWP1. Interacts (via MIT domain) with IST1; leading to the recruitment of SPART to midbodies. Interacts with MAP1LC3A and MAP1LC3C. In terms of processing, ubiquitinated; ubiquitination does not require ITCH and WWP1. In terms of tissue distribution, brain (at protein level).

The protein resides in the cytoplasm. The protein localises to the midbody. Its subcellular location is the lipid droplet. Functionally, lipophagy receptor that plays an important role in lipid droplet (LD) turnover in motor neurons. Localizes to LDs and interacts with components of the autophagy machinery, such as MAP1LC3A/C proteins to deliver LDs to autophagosomes for degradation via lipophagy. Lipid transfer protein required for lipid droplet degradation, including by lipophagy. Can bind and transfer all lipid species found in lipid droplets, from phospholipids to triglycerides and sterol esters but the direction of lipid transfer by spartin and its cargos are unknown. May be implicated in endosomal trafficking, or microtubule dynamics, or both. Participates in cytokinesis. The sequence is that of Spartin from Mus musculus (Mouse).